Consider the following 276-residue polypeptide: Insulin-induced gene 1 protein (276 aa).

Disordered stretches follow at residues 1-26 and 49-73; these read MPRL…PRAS and AAHG…QGSS. Residues 1-83 lie on the Cytoplasmic side of the membrane; that stretch reads MPRLDDHLWR…SHVNSWHHHL (83 aa). Residues 16 to 25 show a composition bias toward basic residues; it reads GTKHRSHPRA. The chain crosses the membrane as a helical span at residues 84–106; it reads VQRSLVLFSVGVVLALVLNLLQV. Topologically, residues 107–125 are extracellular; it reads QRNVTLFPDEVIATIFSSA. The chain crosses the membrane as a helical span at residues 126–143; that stretch reads WWVPPCCGTAAAVVGLLY. Residues 144–158 are Cytoplasmic-facing; sequence PCIDSHLGEPHKFKR. Glycyl lysine isopeptide (Lys-Gly) (interchain with G-Cter in ubiquitin) cross-links involve residues Lys155 and Lys157. Residues 159–181 traverse the membrane as a helical segment; sequence EWASVMRCVAVFVGINHASAKLD. The Extracellular segment spans residues 182 to 184; it reads FAN. Residues 185-203 traverse the membrane as a helical segment; that stretch reads NVQLSLTLAALSLGLWWTF. Topologically, residues 204–208 are cytoplasmic; it reads DRSRS. Ser206 is subject to Phosphoserine. Residues 209-230 traverse the membrane as a helical segment; that stretch reads GLGLGITIAFLATLITQLLVYN. The Extracellular segment spans residues 231 to 244; the sequence is GVYQYTSPDFLYIR. A helical membrane pass occupies residues 245 to 262; it reads SWLPCIFFSGGVTVGNIG. Topologically, residues 263–276 are cytoplasmic; that stretch reads RQLAMGVPEKPHSD. The short motif at 270 to 276 is the KxHxx element; that stretch reads PEKPHSD.

It belongs to the INSIG family. Interacts with SCAP; interaction is direct and only takes place in the presence of sterols; it prevents interaction between SCAP and the coat protein complex II (COPII). Associates with the SCAP-SREBP complex (composed of SCAP and SREBF1/SREBP1 or SREBF2/SREBP2); association is mediated via its interaction with SCAP and only takes place in the presence of sterols. Interaction with SCAP is mutually exclusive with PAQR3. Interacts with HMGCR (via its SSD); the interaction, accelerated by sterols, leads to the recruitment of HMGCR to AMFR/gp78 for its ubiquitination by the sterol-mediated ERAD pathway. Interacts with AMFR/gp78 (via its membrane domain); the interaction recruits HMCR at the ER membrane for its ubiquitination and degradation by the sterol-mediated ERAD pathway. Interacts with SOAT2/ACAT2; leading to promote recruitment of AMFR/gp78 and subsequent ubiquitination of SOAT2/ACAT2. Interacts with RNF139. Interacts with RNF145. In terms of processing, phosphorylation at Ser-206 by PCK1 reduces binding to oxysterol, disrupting the interaction between INSIG1 and SCAP, thereby promoting nuclear translocation of SREBP proteins (SREBF1/SREBP1 or SREBF2/SREBP2) and subsequent transcription of downstream lipogenesis-related genes. Ubiquitinated by AMFR/gp78 in response to sterol deprivation, leading to its degradation: when the SCAP-SREBP complex becomes dissociated from INSIG1, INSIG1 is then ubiquitinated and degraded in proteasomes. Although ubiquitination is required for rapid INSIG1 degradation, it is not required for release of the SCAP-SREBP complex. Ubiquitinated by RNF139.

Its subcellular location is the endoplasmic reticulum membrane. Functionally, oxysterol-binding protein that mediates feedback control of cholesterol synthesis by controlling both endoplasmic reticulum to Golgi transport of SCAP and degradation of HMGCR. Acts as a negative regulator of cholesterol biosynthesis by mediating the retention of the SCAP-SREBP complex in the endoplasmic reticulum, thereby blocking the processing of sterol regulatory element-binding proteins (SREBPs) SREBF1/SREBP1 and SREBF2/SREBP2. Binds oxysterol, including 25-hydroxycholesterol, regulating interaction with SCAP and retention of the SCAP-SREBP complex in the endoplasmic reticulum. In presence of oxysterol, interacts with SCAP, retaining the SCAP-SREBP complex in the endoplasmic reticulum, thereby preventing SCAP from escorting SREBF1/SREBP1 and SREBF2/SREBP2 to the Golgi. Sterol deprivation or phosphorylation by PCK1 reduce oxysterol-binding, disrupting the interaction between INSIG1 and SCAP, thereby promoting Golgi transport of the SCAP-SREBP complex, followed by processing and nuclear translocation of SREBF1/SREBP1 and SREBF2/SREBP2. Also regulates cholesterol synthesis by regulating degradation of HMGCR: initiates the sterol-mediated ubiquitin-mediated endoplasmic reticulum-associated degradation (ERAD) of HMGCR via recruitment of the reductase to the ubiquitin ligases AMFR/gp78 and/or RNF139. Also regulates degradation of SOAT2/ACAT2 when the lipid levels are low: initiates the ubiquitin-mediated degradation of SOAT2/ACAT2 via recruitment of the ubiquitin ligases AMFR/gp78. This chain is Insulin-induced gene 1 protein, found in Bos taurus (Bovine).